A 256-amino-acid chain; its full sequence is Imidazole glycerol phosphate synthase subunit HisF (256 aa).

Active-site residues include Asp-11 and Asp-130.

The protein belongs to the HisA/HisF family. In terms of assembly, heterodimer of HisH and HisF.

The protein resides in the cytoplasm. The catalysed reaction is 5-[(5-phospho-1-deoxy-D-ribulos-1-ylimino)methylamino]-1-(5-phospho-beta-D-ribosyl)imidazole-4-carboxamide + L-glutamine = D-erythro-1-(imidazol-4-yl)glycerol 3-phosphate + 5-amino-1-(5-phospho-beta-D-ribosyl)imidazole-4-carboxamide + L-glutamate + H(+). The protein operates within amino-acid biosynthesis; L-histidine biosynthesis; L-histidine from 5-phospho-alpha-D-ribose 1-diphosphate: step 5/9. Functionally, IGPS catalyzes the conversion of PRFAR and glutamine to IGP, AICAR and glutamate. The HisF subunit catalyzes the cyclization activity that produces IGP and AICAR from PRFAR using the ammonia provided by the HisH subunit. The chain is Imidazole glycerol phosphate synthase subunit HisF from Prochlorococcus marinus (strain MIT 9312).